The chain runs to 134 residues: kinetoplast-associated protein 3 (134 aa).

A propeptide spanning residues 1 to 10 (MLRRSPTLLR) is cleaved from the precursor. The segment covering 106-124 (PKAPKAAKSASSKVKTAAK) has biased composition (low complexity). The interval 106–134 (PKAPKAAKSASSKVKTAAKTAKKTTAARK) is disordered. Positions 125–134 (TAKKTTAARK) are enriched in basic residues.

Belongs to the KAP family. As to quaternary structure, associates with the kinetoplast DNA network.

The protein resides in the mitochondrion matrix. It localises to the kinetoplast. Histone H1-like DNA-binding protein involved in the organization and segregation of kinetoplast DNA (kDNA). The mitochondrial DNA of kinetoplastid protozoa consists of about 5,000 minicircles and 20 to 30 maxicircles. These circular DNAs are held together by catenation into a highly organized compact disk structure referred to as a kinetoplast DNA (kDNA) network. Binds preferentially to a specific fragment of minicircle DNA and is able to compact kDNA networks through DNA charge neutralization and condensation. The protein is kinetoplast-associated protein 3 (KAP3) of Crithidia fasciculata.